Here is a 37-residue protein sequence, read N- to C-terminus: Large ribosomal subunit protein bL36c (37 aa).

This sequence belongs to the bacterial ribosomal protein bL36 family.

Its subcellular location is the plastid. It localises to the chloroplast. The sequence is that of Large ribosomal subunit protein bL36c from Cucumis sativus (Cucumber).